The primary structure comprises 306 residues: HTH-type transcriptional regulator AlkR (306 aa).

The region spanning 207–305 (SNALAAIHAY…EQSPKHYRQQ (99 aa)) is the HTH araC/xylS-type domain. 2 consecutive DNA-binding regions (H-T-H motif) follow at residues 224 to 245 (ESLA…QSIV) and 272 to 295 (IQQI…KRQF).

Its pathway is hydrocarbon metabolism; alkane degradation. This protein activates the expression of the alkane 1-monooxygenase AlkM. This Acinetobacter baylyi (strain ATCC 33305 / BD413 / ADP1) protein is HTH-type transcriptional regulator AlkR (alkR).